A 434-amino-acid polypeptide reads, in one-letter code: MAEEADTNIEIWKIKKLIKGLESARGNGTSMISLIMPPRDQVSRVTKMLGDEYGTASNIKSRVNRQSVLSAITSAQQRLKLYNKVPTNGLVLYTGTIVNDDGKEKKVTFDFEPFRPINASLYLCDNKFHTEALNELLESDDKFGFIVMDGNGTLFGTLSGNTREVLHKFTVDLPKKHGRGGQSALRFARLRMEKRHNYVRKTAELATQFYINPATSQPNVSGLILAGSADFKTELSQSELFDPRLQAKILNVVDVSYGGENGFNQAIELSAEILSNVKFIQEKKLIGKYFEEISQDTGKYVFGVEDTLKALEMGAIETLIVWENLDINRYELKNSTTGEMVVKHFGKDQESDTSNFHDSETNAELEVQEKMPLLEWFANEYKRFGCTLEFVTNKSQEGSQFCRGFGGIGGMLRYQLDMRTFDELSDTEVYEDSD.

The residue at position 2 (Ala2) is an N-acetylalanine.

This sequence belongs to the eukaryotic release factor 1 family. Heterodimer of two subunits, one of which binds GTP.

It localises to the cytoplasm. Directs the termination of nascent peptide synthesis (translation) in response to the termination codons UAA, UAG and UGA. Modulates plant growth and development. The polypeptide is Eukaryotic peptide chain release factor subunit 1-2 (Arabidopsis thaliana (Mouse-ear cress)).